The following is a 257-amino-acid chain: Gene 3 protein (257 aa).

Residues 163–176 (STENLLGQTQSSTH) show a composition bias toward polar residues. Residues 163–257 (STENLLGQTQ…SDSSVSSVFF (95 aa)) are disordered. Over residues 214–240 (SIREETVSGMARAREECNSPSEHDRLT) the composition is skewed to basic and acidic residues.

The sequence is that of Gene 3 protein from Equine herpesvirus 1 (strain Ab4p) (EHV-1).